The sequence spans 60 residues: Metallothionein (60 aa).

The tract at residues 1 to 28 (MDCACATGGSCSCAGSCKCENCKCTSCK) is beta. A divalent metal cation contacts are provided by C3, C5, C11, C13, C17, C19, C22, C24, C27, C31, C32, C34, C35, C39, C42, C46, C48, C56, C58, and C59. Positions 29–60 (KSCCSCCPSECEKCGQGCVCKGGSSEKCSCCN) are alpha.

Belongs to the metallothionein superfamily. Type 1 family.

Functionally, metallothioneins have a high content of cysteine residues that bind various heavy metals. The sequence is that of Metallothionein (MT-A) from Ambystoma mexicanum (Axolotl).